The following is a 339-amino-acid chain: NADH-quinone oxidoreductase subunit H (339 aa).

9 helical membrane-spanning segments follow: residues I9–C29, P50–F70, I82–I102, V115–G135, M161–V181, M187–L207, M235–T255, I275–I295, and G311–I331.

This sequence belongs to the complex I subunit 1 family. As to quaternary structure, NDH-1 is composed of 14 different subunits. Subunits NuoA, H, J, K, L, M, N constitute the membrane sector of the complex.

It is found in the cell inner membrane. It carries out the reaction a quinone + NADH + 5 H(+)(in) = a quinol + NAD(+) + 4 H(+)(out). NDH-1 shuttles electrons from NADH, via FMN and iron-sulfur (Fe-S) centers, to quinones in the respiratory chain. The immediate electron acceptor for the enzyme in this species is believed to be ubiquinone. Couples the redox reaction to proton translocation (for every two electrons transferred, four hydrogen ions are translocated across the cytoplasmic membrane), and thus conserves the redox energy in a proton gradient. This subunit may bind ubiquinone. The sequence is that of NADH-quinone oxidoreductase subunit H from Rickettsia bellii (strain RML369-C).